We begin with the raw amino-acid sequence, 430 residues long: Enolase (430 aa).

(2R)-2-phosphoglycerate is bound at residue Gln163. Catalysis depends on Glu205, which acts as the Proton donor. Asp242, Glu288, and Asp315 together coordinate Mg(2+). Residues Lys340, Arg369, Ser370, and Lys391 each coordinate (2R)-2-phosphoglycerate. Lys340 (proton acceptor) is an active-site residue.

This sequence belongs to the enolase family. The cofactor is Mg(2+).

The protein resides in the cytoplasm. It localises to the secreted. The protein localises to the cell surface. The enzyme catalyses (2R)-2-phosphoglycerate = phosphoenolpyruvate + H2O. It participates in carbohydrate degradation; glycolysis; pyruvate from D-glyceraldehyde 3-phosphate: step 4/5. Functionally, catalyzes the reversible conversion of 2-phosphoglycerate (2-PG) into phosphoenolpyruvate (PEP). It is essential for the degradation of carbohydrates via glycolysis. The protein is Enolase of Onion yellows phytoplasma (strain OY-M).